We begin with the raw amino-acid sequence, 283 residues long: Protein boule-like (283 aa).

Positions 1-25 (MQTDSLSPSPNPVSPVPLNNPTSAP) are disordered. Residues 33-110 (NRIFVGGIDF…KKLNIGPAIR (78 aa)) form the RRM domain. In terms of domain architecture, DAZ spans 160 to 184 (PSRSVCSSPVMVAQPIYQQPAYHYQ).

Belongs to the RRM DAZ family. Interacts with DAZ1 and DAZL.

The protein localises to the cytoplasm. Its function is as follows. Probable RNA-binding protein, which may be required during spermatogenesis. May act by binding to the 3'-UTR of mRNAs and regulating their translation. The protein is Protein boule-like (BOLL) of Macaca fascicularis (Crab-eating macaque).